The primary structure comprises 149 residues: MRAVVQRVISSKVEVDGKVIGSIGKGLNVLLGISKEDTEEDIKYLKEKIINLRIFEDENEKLNKSLLDIGGDIIIVSQFTLYGDCRKGRRPSFIEALGGEEASILYNKFVESIKKEVNNVATGEFGADMKVYIENDGPVTILLDSRKTF.

Positions 137–138 (GP) match the Gly-cisPro motif, important for rejection of L-amino acids motif.

This sequence belongs to the DTD family. Homodimer.

The protein localises to the cytoplasm. The catalysed reaction is glycyl-tRNA(Ala) + H2O = tRNA(Ala) + glycine + H(+). The enzyme catalyses a D-aminoacyl-tRNA + H2O = a tRNA + a D-alpha-amino acid + H(+). In terms of biological role, an aminoacyl-tRNA editing enzyme that deacylates mischarged D-aminoacyl-tRNAs. Also deacylates mischarged glycyl-tRNA(Ala), protecting cells against glycine mischarging by AlaRS. Acts via tRNA-based rather than protein-based catalysis; rejects L-amino acids rather than detecting D-amino acids in the active site. By recycling D-aminoacyl-tRNA to D-amino acids and free tRNA molecules, this enzyme counteracts the toxicity associated with the formation of D-aminoacyl-tRNA entities in vivo and helps enforce protein L-homochirality. The polypeptide is D-aminoacyl-tRNA deacylase (Clostridium botulinum (strain 657 / Type Ba4)).